The sequence spans 428 residues: Tol-Pal system protein TolB (428 aa).

Positions 1-23 (MRRLYQTVCTLALLLVGLQAAHA) are cleaved as a signal peptide.

It belongs to the TolB family. In terms of assembly, the Tol-Pal system is composed of five core proteins: the inner membrane proteins TolA, TolQ and TolR, the periplasmic protein TolB and the outer membrane protein Pal. They form a network linking the inner and outer membranes and the peptidoglycan layer.

It localises to the periplasm. Functionally, part of the Tol-Pal system, which plays a role in outer membrane invagination during cell division and is important for maintaining outer membrane integrity. The chain is Tol-Pal system protein TolB from Alkalilimnicola ehrlichii (strain ATCC BAA-1101 / DSM 17681 / MLHE-1).